Consider the following 79-residue polypeptide: Dolichyl-diphosphooligosaccharide--protein glycosyltransferase subunit TMEM258 (79 aa).

A run of 2 helical transmembrane segments spans residues 17–37 (VFPHLTVVLLAIGMFFTAWFF) and 55–75 (LISLVASLFMGFGVLFLLLWV).

This sequence belongs to the OST5 family. As to quaternary structure, component of the oligosaccharyltransferase (OST) complex.

Its subcellular location is the membrane. The protein localises to the endoplasmic reticulum. It is found in the cytoplasm. It participates in protein modification; protein glycosylation. Functionally, subunit of the oligosaccharyl transferase (OST) complex that catalyzes the initial transfer of a defined glycan (Glc(3)Man(9)GlcNAc(2) in eukaryotes) from the lipid carrier dolichol-pyrophosphate to an asparagine residue within an Asn-X-Ser/Thr consensus motif in nascent polypeptide chains, the first step in protein N-glycosylation. N-glycosylation occurs cotranslationally and the complex associates with the Sec61 complex at the channel-forming translocon complex that mediates protein translocation across the endoplasmic reticulum (ER). All subunits are required for a maximal enzyme activity. This Gallus gallus (Chicken) protein is Dolichyl-diphosphooligosaccharide--protein glycosyltransferase subunit TMEM258.